The sequence spans 723 residues: Fatty acid oxidation complex subunit alpha (723 aa).

Positions 1–189 (MIYQAETLQV…KIGLLDAVVD (189 aa)) are enoyl-CoA hydratase/isomerase. Asp296 contributes to the substrate binding site. Positions 311-723 (NKETQRAAVL…FYGAQQQGSI (413 aa)) are 3-hydroxyacyl-CoA dehydrogenase. NAD(+) contacts are provided by residues Met325, Asp344, 401 to 403 (VVE), Lys408, and Ser430. His451 functions as the For 3-hydroxyacyl-CoA dehydrogenase activity in the catalytic mechanism. Asn454 is a binding site for NAD(+). Substrate contacts are provided by Asn501 and Tyr661.

The protein in the N-terminal section; belongs to the enoyl-CoA hydratase/isomerase family. This sequence in the C-terminal section; belongs to the 3-hydroxyacyl-CoA dehydrogenase family. Heterotetramer of two alpha chains (FadB) and two beta chains (FadA).

The enzyme catalyses a (3S)-3-hydroxyacyl-CoA + NAD(+) = a 3-oxoacyl-CoA + NADH + H(+). It carries out the reaction a (3S)-3-hydroxyacyl-CoA = a (2E)-enoyl-CoA + H2O. The catalysed reaction is a 4-saturated-(3S)-3-hydroxyacyl-CoA = a (3E)-enoyl-CoA + H2O. It catalyses the reaction (3S)-3-hydroxybutanoyl-CoA = (3R)-3-hydroxybutanoyl-CoA. The enzyme catalyses a (3Z)-enoyl-CoA = a 4-saturated (2E)-enoyl-CoA. It carries out the reaction a (3E)-enoyl-CoA = a 4-saturated (2E)-enoyl-CoA. The protein operates within lipid metabolism; fatty acid beta-oxidation. In terms of biological role, involved in the aerobic and anaerobic degradation of long-chain fatty acids via beta-oxidation cycle. Catalyzes the formation of 3-oxoacyl-CoA from enoyl-CoA via L-3-hydroxyacyl-CoA. It can also use D-3-hydroxyacyl-CoA and cis-3-enoyl-CoA as substrate. The polypeptide is Fatty acid oxidation complex subunit alpha (Vibrio vulnificus (strain YJ016)).